Consider the following 1917-residue polypeptide: Diacylglycerol kinase eta (1917 aa).

Basic and acidic residues predominate over residues 1–10 (MSHLKLDTLH). The tract at residues 1-37 (MSHLKLDTLHVQRSPRGSRRSSRSSGRSSACSSGSIS) is disordered. Positions 23-37 (RSSGRSSACSSGSIS) are enriched in low complexity. In terms of domain architecture, PH spans 82 to 175 (AIIKEGFLLK…WLGSLKTATA (94 aa)). 2 Phorbol-ester/DAG-type zinc fingers span residues 195 to 245 (HHHW…IANC) and 268 to 319 (PHQW…AVAC). The 137-residue stretch at 350–486 (GNFSPLLVFV…DRWSIMVFEK (137 aa)) folds into the DAGKc domain. 3 disordered regions span residues 1015–1053 (TTLCSEHAGPPKPPRKKSLSALSRTQAHPRRRNSSPPRI), 1114–1149 (LEQQQRDGDNDTEYPEQQQTPTNKGPNSLATTSEDE), and 1380–1399 (KDKDEKGGKDKDKTPTEETN). The segment covering 1128–1145 (PEQQQTPTNKGPNSLATT) has biased composition (polar residues). Residues 1854–1917 (WSVNEVVTWL…LQAIKDLSEN (64 aa)) form the SAM domain.

The protein belongs to the eukaryotic diacylglycerol kinase family.

It is found in the cytoplasm. It catalyses the reaction a 1,2-diacyl-sn-glycerol + ATP = a 1,2-diacyl-sn-glycero-3-phosphate + ADP + H(+). Its function is as follows. Phosphorylates diacylglycerol (DAG) to generate phosphatidic acid (PA). This Drosophila yakuba (Fruit fly) protein is Diacylglycerol kinase eta.